Consider the following 377-residue polypeptide: Beta-lactamase (377 aa).

An N-terminal signal peptide occupies residues 1–19 (MFKTTLCALLITASCSTFA). The Acyl-ester intermediate role is filled by serine 80. Residues serine 80, glutamine 136, tyrosine 166, asparagine 168, alanine 334, and asparagine 359 each contribute to the a beta-lactam site.

This sequence belongs to the class-C beta-lactamase family. In terms of assembly, monomer.

The protein localises to the periplasm. The catalysed reaction is a beta-lactam + H2O = a substituted beta-amino acid. With respect to regulation, inhibited by the beta-lactamase-blocking agents avibactam, enmetazobactam, relebactam, nacubactam, vaborbactam, taniborbactam, zidebactam, and beta-lactam-analog boronic acids, via a covalent binding to Ser-80. Inhibited by non-beta-lactam, benzo(b)thiophene-2-boronic acid (BZBTH2B) and various cyclic boronates. Not inhibited by clavulanic acid. Inhibited by O-aryloxycarbonyl hydroxamates, via cross-linking of the active site Ser-80 to Lys-331. Weakly inhibited by citric acid. Class C beta-lactamase which confers resistance to penicillins and cephalosporins. Has benzylpenicillin- and cephaloridine-hydrolyzing activity. Has weak cefuroxime, cefotaxime, cefoxitin and oxacillin-hydrolyzing activities. The sequence is that of Beta-lactamase from Escherichia coli (strain K12).